Consider the following 206-residue polypeptide: MATITIYDQTKKEVGSMDLAPEVFEVPVKPEILHLVVRSQLAAKRQGTHATKTRGMKRGGGAKPWRQKGTGRARAGSTRSPLWRGGGTTFGPQPRDYSFKVNKKVRRLALKMALTSRLSEEKMMVVKNIDLPEIKTKLFVEVAEALGLEKALVVVKDADNKLLLSARNIPGIKLITADQLNVYDILKARQLVMLENAAQDLQERLK.

Residues 44-87 (KRQGTHATKTRGMKRGGGAKPWRQKGTGRARAGSTRSPLWRGGG) form a disordered region.

It belongs to the universal ribosomal protein uL4 family. As to quaternary structure, part of the 50S ribosomal subunit.

One of the primary rRNA binding proteins, this protein initially binds near the 5'-end of the 23S rRNA. It is important during the early stages of 50S assembly. It makes multiple contacts with different domains of the 23S rRNA in the assembled 50S subunit and ribosome. In terms of biological role, forms part of the polypeptide exit tunnel. The protein is Large ribosomal subunit protein uL4 of Maridesulfovibrio salexigens (strain ATCC 14822 / DSM 2638 / NCIMB 8403 / VKM B-1763) (Desulfovibrio salexigens).